Reading from the N-terminus, the 467-residue chain is MTKIVSVAEVLQGRTAIGEKVTVRGWVRTRRDSKAGLSFLAVYDGSCFDPIQAIINNDIVNYESEVLRLTTGCSVIVTGTVSKSPAEGQAVELQAETVEVVGWVEDPDTYPMAAKRHSIEYLREVAHLRPRTNIIGAVARVRHCLAQAIHRFFNEQGFYWVATPLITASDTEGAGEMFRVSTLDLENLPRDDKGAVDFSQDFFGKESFLTVSGQLNGETYACALSKVYTFGPTFRAENSNTTRHLAEFWMVEPEVAFATLADNAKLAEDMLKYVFNAVLKERMDDLKFFEKHIDKDVINRLERFVASDFAQIDYTDAIDVLLKSGKKFEFPVSWGIDLSSEHERYLAEEHFKSPVVVKNYPKDIKAFYMRLNEDGKTVAAMDVLAPGIGEIIGGSQREERLDVLDARMAEMGLNPEDYWWYRDLRKYGTVPHSGFGLGFERLIVYVTGLQNIREVIPFPRTPRNANF.

The protein belongs to the class-II aminoacyl-tRNA synthetase family. In terms of assembly, homodimer.

The protein localises to the cytoplasm. The catalysed reaction is tRNA(Asn) + L-asparagine + ATP = L-asparaginyl-tRNA(Asn) + AMP + diphosphate + H(+). This Mannheimia succiniciproducens (strain KCTC 0769BP / MBEL55E) protein is Asparagine--tRNA ligase.